The chain runs to 428 residues: tRNA(Ile2) 2-agmatinylcytidine synthetase TiaS (428 aa).

The protein belongs to the TiaS family.

It is found in the cytoplasm. The enzyme catalyses cytidine(34) in tRNA(Ile2) + agmatine + ATP + H2O = 2-agmatinylcytidine(34) in tRNA(Ile2) + AMP + 2 phosphate + 2 H(+). Its function is as follows. ATP-dependent agmatine transferase that catalyzes the formation of 2-agmatinylcytidine (agm2C) at the wobble position (C34) of tRNA(Ile2), converting the codon specificity from AUG to AUA. The sequence is that of tRNA(Ile2) 2-agmatinylcytidine synthetase TiaS from Methanosarcina mazei (strain ATCC BAA-159 / DSM 3647 / Goe1 / Go1 / JCM 11833 / OCM 88) (Methanosarcina frisia).